The primary structure comprises 329 residues: UDP-N-acetylenolpyruvoylglucosamine reductase (329 aa).

An FAD-binding PCMH-type domain is found at 28-192 (RVGGPADLLC…ARVEVRLHAG (165 aa)). Arginine 172 is an active-site residue. The tract at residues 202 to 227 (REDRERRRATQPLDRPTFGSTFTNPP) is disordered. Residue serine 221 is the Proton donor of the active site. The active site involves glutamate 291. The segment at 307–329 (DGHAAAGGGPGAASGGVRPPEAT) is disordered. Positions 311 to 320 (AAGGGPGAAS) are enriched in gly residues.

It belongs to the MurB family. FAD is required as a cofactor.

The protein localises to the cytoplasm. It carries out the reaction UDP-N-acetyl-alpha-D-muramate + NADP(+) = UDP-N-acetyl-3-O-(1-carboxyvinyl)-alpha-D-glucosamine + NADPH + H(+). Its pathway is cell wall biogenesis; peptidoglycan biosynthesis. In terms of biological role, cell wall formation. The protein is UDP-N-acetylenolpyruvoylglucosamine reductase of Anaeromyxobacter sp. (strain K).